Consider the following 1012-residue polypeptide: Structural polyprotein (1012 aa).

Residue aspartate 30 participates in a divalent metal cation binding. One can recognise a Peptidase S50 domain in the interval 514 to 755; it reads ADKGYEVVAN…AGRQFHLALA (242 aa). Serine 653 functions as the Nucleophile in the catalytic mechanism. Lysine 692 is an active-site residue. A disordered region spans residues 972–1012; it reads MKHRNPRRAPPKPKPKPNAPSQRPPGRLGRWIRTVSDEDLE. Residues 975–986 show a composition bias toward basic residues; it reads RNPRRAPPKPKP. The tract at residues 1003–1012 is interaction with VP1 protein; the sequence is IRTVSDEDLE.

In terms of assembly, homotrimer. A central divalent metal stabilizes the VP2 trimer. Interacts with host ITGA4/ITGB1. Homodimer. Interacts (via C-terminus) with VP1 in the cytoplasm. Interacts with VP2. In terms of processing, specific enzymatic cleavages yield mature proteins. The capsid assembly seems to be regulated by polyprotein processing. The protease VP4 cleaves itself off the polyprotein, thus releasing pre-VP2 and VP3 within the infected cell. During capsid assembly, the C-terminus of pre-VP2 is further processed by VP4, giving rise to VP2, the external capsid protein and three small peptides that all stay closely associated with the capsid.

It localises to the virion. The protein localises to the host cytoplasm. Capsid protein VP2 self assembles to form an icosahedral capsid with a T=13 symmetry, about 70 nm in diameter, and consisting of 260 VP2 trimers. The capsid encapsulates the genomic dsRNA. VP2 is also involved in attachment and entry into the host cell by interacting with host ITGA4/ITGB1. In terms of biological role, the precursor of VP2 plays an important role in capsid assembly. First, pre-VP2 and VP2 oligomers assemble to form a procapsid. Then, the pre-VP2 intermediates may be processed into VP2 proteins by proteolytic cleavage mediated by VP4 to obtain the mature virion. The final capsid is composed of pentamers and hexamers but VP2 has a natural tendency to assemble into all-pentameric structures. Therefore pre-VP2 may be required to allow formation of the hexameric structures. Functionally, protease VP4 is a serine protease that cleaves the polyprotein into its final products. Pre-VP2 is first partially cleaved, and may be completely processed by VP4 upon capsid maturation. Its function is as follows. Capsid protein VP3 plays a key role in virion assembly by providing a scaffold for the capsid made of VP2. May self-assemble to form a T=4-like icosahedral inner-capsid composed of at least 180 trimers. Plays a role in genomic RNA packaging by recruiting VP1 into the capsid and interacting with the dsRNA genome segments to form a ribonucleoprotein complex. Additionally, the interaction of the VP3 C-terminal tail with VP1 removes the inherent structural blockade of the polymerase active site. Thus, VP3 can also function as a transcriptional activator. Structural peptide 1 is a small peptide derived from pre-VP2 C-terminus. It destabilizes and perforates cell membranes, suggesting a role during entry. In terms of biological role, structural peptide 2 is a small peptide derived from pVP2 C-terminus. It is not essential for the virus viability, but viral growth is affected when missing. Functionally, structural peptide 3 is a small peptide derived from pVP2 C-terminus. It is not essential for the virus viability, but viral growth is affected when missing. Its function is as follows. Structural peptide 4 is a small peptide derived from pVP2 C-terminus. It is essential for the virus viability. The sequence is that of Structural polyprotein from Gallus gallus (Chicken).